Here is a 212-residue protein sequence, read N- to C-terminus: Cytidylate kinase (212 aa).

7-15 (GPAASGKGT) provides a ligand contact to ATP.

Belongs to the cytidylate kinase family. Type 1 subfamily.

The protein resides in the cytoplasm. The enzyme catalyses CMP + ATP = CDP + ADP. It catalyses the reaction dCMP + ATP = dCDP + ADP. The protein is Cytidylate kinase of Bradyrhizobium sp. (strain ORS 278).